The primary structure comprises 198 residues: Imidazoleglycerol-phosphate dehydratase (198 aa).

This sequence belongs to the imidazoleglycerol-phosphate dehydratase family.

It is found in the cytoplasm. The catalysed reaction is D-erythro-1-(imidazol-4-yl)glycerol 3-phosphate = 3-(imidazol-4-yl)-2-oxopropyl phosphate + H2O. It participates in amino-acid biosynthesis; L-histidine biosynthesis; L-histidine from 5-phospho-alpha-D-ribose 1-diphosphate: step 6/9. This is Imidazoleglycerol-phosphate dehydratase from Nitratidesulfovibrio vulgaris (strain DP4) (Desulfovibrio vulgaris).